Consider the following 413-residue polypeptide: Serine hydroxymethyltransferase (413 aa).

(6S)-5,6,7,8-tetrahydrofolate-binding positions include L117 and 121–123; that span reads GHL. N6-(pyridoxal phosphate)lysine is present on K226. 349-351 provides a ligand contact to (6S)-5,6,7,8-tetrahydrofolate; it reads SPF.

It belongs to the SHMT family. As to quaternary structure, homodimer. Requires pyridoxal 5'-phosphate as cofactor.

The protein localises to the cytoplasm. It catalyses the reaction (6R)-5,10-methylene-5,6,7,8-tetrahydrofolate + glycine + H2O = (6S)-5,6,7,8-tetrahydrofolate + L-serine. It functions in the pathway one-carbon metabolism; tetrahydrofolate interconversion. It participates in amino-acid biosynthesis; glycine biosynthesis; glycine from L-serine: step 1/1. Catalyzes the reversible interconversion of serine and glycine with tetrahydrofolate (THF) serving as the one-carbon carrier. This reaction serves as the major source of one-carbon groups required for the biosynthesis of purines, thymidylate, methionine, and other important biomolecules. Also exhibits THF-independent aldolase activity toward beta-hydroxyamino acids, producing glycine and aldehydes, via a retro-aldol mechanism. This Pelobacter propionicus (strain DSM 2379 / NBRC 103807 / OttBd1) protein is Serine hydroxymethyltransferase.